The primary structure comprises 493 residues: Amidophosphoribosyltransferase (493 aa).

The propeptide occupies methionine 1–alanine 26. Cysteine 27 serves as the catalytic Nucleophile. A Glutamine amidotransferase type-2 domain is found at cysteine 27–alanine 252. [4Fe-4S] cluster is bound at residue cysteine 268. Residues serine 315, aspartate 377, and aspartate 378 each contribute to the Mg(2+) site. Residues cysteine 414, cysteine 465, and cysteine 468 each contribute to the [4Fe-4S] cluster site.

In the C-terminal section; belongs to the purine/pyrimidine phosphoribosyltransferase family. It depends on Mg(2+) as a cofactor. Requires [4Fe-4S] cluster as cofactor.

It carries out the reaction 5-phospho-beta-D-ribosylamine + L-glutamate + diphosphate = 5-phospho-alpha-D-ribose 1-diphosphate + L-glutamine + H2O. It participates in purine metabolism; IMP biosynthesis via de novo pathway; N(1)-(5-phospho-D-ribosyl)glycinamide from 5-phospho-alpha-D-ribose 1-diphosphate: step 1/2. Catalyzes the formation of phosphoribosylamine from phosphoribosylpyrophosphate (PRPP) and glutamine. This is Amidophosphoribosyltransferase from Synechococcus elongatus (strain ATCC 33912 / PCC 7942 / FACHB-805) (Anacystis nidulans R2).